The sequence spans 736 residues: Gephyrin (736 aa).

The MPT Mo-transferase stretch occupies residues 14–153 (QIRVGVLTVS…LPGSKKGSQE (140 aa)). Disordered stretches follow at residues 181–232 (DELE…DSSS) and 260–290 (TASLSTTPSESPRAQATSRLSTASCPTPKVQ). Residues 187–199 (PSPPPPLSPPPTT) are compositionally biased toward pro residues. The span at 261–290 (ASLSTTPSESPRAQATSRLSTASCPTPKVQ) shows a compositional bias: polar residues. The tract at residues 294 to 736 (SSKENILRAS…VVDVMVIGRL (443 aa)) is MPT adenylyltransferase.

The protein in the N-terminal section; belongs to the MoaB/Mog family. It in the C-terminal section; belongs to the MoeA family. As to quaternary structure, homotrimer, homodimer and homooligomer. Interacts with glycine receptors. It depends on Mg(2+) as a cofactor.

The protein localises to the postsynaptic cell membrane. It localises to the cell membrane. Its subcellular location is the cytoplasm. The protein resides in the cytosol. It is found in the cytoskeleton. The protein localises to the cell projection. It localises to the dendrite. Its subcellular location is the postsynaptic density. The enzyme catalyses molybdopterin + ATP + H(+) = adenylyl-molybdopterin + diphosphate. It catalyses the reaction adenylyl-molybdopterin + molybdate = Mo-molybdopterin + AMP + H(+). It functions in the pathway cofactor biosynthesis; molybdopterin biosynthesis. Functionally, microtubule-associated protein involved in membrane protein-cytoskeleton interactions. It is thought to anchor the inhibitory glycine receptor (GLYR) to subsynaptic microtubules. Acts as a major instructive molecule at inhibitory synapses, where it also clusters GABA type A receptors. In terms of biological role, also has a catalytic activity and catalyzes two steps in the biosynthesis of the molybdenum cofactor. In the first step, molybdopterin is adenylated. Subsequently, molybdate is inserted into adenylated molybdopterin and AMP is released. The chain is Gephyrin (GPHN) from Gallus gallus (Chicken).